Consider the following 169-residue polypeptide: MVPVARASLFTLACLLVSVCAQNFPGPPPGAVLRGPFPPARPSLTNRVHPPTSAAGMQLMRRMAVSEAVLSSDYTKRMTALDAIQNIPCVFRNPVLKYLLMDYMDMKPLPLPGSVQSQMSPATQSMILTDRGRRLQAGKLLNSRCVQSHDRLGALMYDIAEVPMAASAL.

An N-terminal signal peptide occupies residues 1 to 21 (MVPVARASLFTLACLLVSVCA).

As to expression, component of the acid-soluble and acid-insoluble organic matrix of calcified shell layers (at protein level).

It localises to the secreted. This is an uncharacterized protein from Haliotis asinina (Donkey's ear abalone).